Here is a 185-residue protein sequence, read N- to C-terminus: Large ribosomal subunit protein uL5 (185 aa).

Belongs to the universal ribosomal protein uL5 family. As to quaternary structure, part of the 50S ribosomal subunit; part of the 5S rRNA/L5/L18/L25 subcomplex. Contacts the 5S rRNA and the P site tRNA. Forms a bridge to the 30S subunit in the 70S ribosome.

This is one of the proteins that bind and probably mediate the attachment of the 5S RNA into the large ribosomal subunit, where it forms part of the central protuberance. In the 70S ribosome it contacts protein S13 of the 30S subunit (bridge B1b), connecting the 2 subunits; this bridge is implicated in subunit movement. Contacts the P site tRNA; the 5S rRNA and some of its associated proteins might help stabilize positioning of ribosome-bound tRNAs. The sequence is that of Large ribosomal subunit protein uL5 from Brucella abortus (strain 2308).